Reading from the N-terminus, the 379-residue chain is MRLHAPILSLLAAAASTSAAGVTGSAEGFAKGVTGGGSATPVYPSTTAELVSYLGDSSARVIVLTKTFDFTGTEGTTTETGCAPWGTASACQVAINKNDWCTNYQPNAPSVSVTYDNAGVLGITVKSNKSLVGEGSSGVIKGKGLRIVSGASNVIIQNIAITDLNPKYVWGGDAITLDNADMVWIDHVTTARIGRQHLVLGTSASNRVTVSNSYFNGVTSYSATCDGYHYWGIYLTGSNDMVTLKGNYIYHMSGRSPKVGGNTLLHAVNNYWYDSSGHAFEIDSGGYVLAEGNVFQNIPTVIEGTVGGQLFTSPDSSTNAICSTYLGHTCQVNGFGSSGTFKQADTAFLVNFQGKNIASASAYTVAQSSVPSNAGQGKL.

The signal sequence occupies residues 1 to 19; the sequence is MRLHAPILSLLAAAASTSA. 2 cysteine pairs are disulfide-bonded: cysteine 82-cysteine 101 and cysteine 91-cysteine 225. N-linked (GlcNAc...) asparagine glycosylation is present at asparagine 128. Residue arginine 255 is part of the active site. Cysteine 322 and cysteine 330 are oxidised to a cystine.

This sequence belongs to the polysaccharide lyase 1 family.

It is found in the secreted. It carries out the reaction Eliminative cleavage of (1-&gt;4)-alpha-D-galacturonan methyl ester to give oligosaccharides with 4-deoxy-6-O-methyl-alpha-D-galact-4-enuronosyl groups at their non-reducing ends.. Pectinolytic enzymes consist of four classes of enzymes: pectin lyase, polygalacturonase, pectin methylesterase and rhamnogalacturonase. Among pectinolytic enzymes, pectin lyase is the most important in depolymerization of pectin, since it cleaves internal glycosidic bonds of highly methylated pectins. This chain is Pectin lyase B (pelB), found in Emericella nidulans (strain FGSC A4 / ATCC 38163 / CBS 112.46 / NRRL 194 / M139) (Aspergillus nidulans).